The primary structure comprises 389 residues: Chalcone synthase 1 (389 aa).

Residue Cys164 is part of the active site.

The protein belongs to the thiolase-like superfamily. Chalcone/stilbene synthases family.

The enzyme catalyses (E)-4-coumaroyl-CoA + 3 malonyl-CoA + 3 H(+) = 2',4,4',6'-tetrahydroxychalcone + 3 CO2 + 4 CoA. It functions in the pathway secondary metabolite biosynthesis; flavonoid biosynthesis. Its function is as follows. The primary product of this enzyme is 4,2',4',6'-tetrahydroxychalcone (also termed naringenin-chalcone or chalcone) which can under specific conditions spontaneously isomerize into naringenin. This chain is Chalcone synthase 1 (CHS1), found in Pisum sativum (Garden pea).